Reading from the N-terminus, the 360-residue chain is DNA replication and repair protein RecF (360 aa).

33-40 contributes to the ATP binding site; the sequence is GENGSGKT.

It belongs to the RecF family.

It is found in the cytoplasm. The RecF protein is involved in DNA metabolism; it is required for DNA replication and normal SOS inducibility. RecF binds preferentially to single-stranded, linear DNA. It also seems to bind ATP. The sequence is that of DNA replication and repair protein RecF from Rickettsia conorii (strain ATCC VR-613 / Malish 7).